Consider the following 153-residue polypeptide: UPF0178 protein Ccel_2994 (153 aa).

Belongs to the UPF0178 family.

This chain is UPF0178 protein Ccel_2994, found in Ruminiclostridium cellulolyticum (strain ATCC 35319 / DSM 5812 / JCM 6584 / H10) (Clostridium cellulolyticum).